Here is a 438-residue protein sequence, read N- to C-terminus: sn-glycerol-3-phosphate-binding periplasmic protein UgpB (438 aa).

A signal peptide spans 1–23 (MKPLRYTASALALGLALMANAQA). The sn-glycerol 3-phosphate site is built by Tyr-65, Glu-89, Ser-144, Ser-270, Gly-307, Tyr-346, and Arg-397.

This sequence belongs to the bacterial solute-binding protein 1 family. In terms of assembly, the complex is composed of two ATP-binding proteins (UgpC), two transmembrane proteins (UgpA and UgpE) and a solute-binding protein (UgpB).

It is found in the periplasm. Its function is as follows. Part of the ABC transporter complex UgpBAEC involved in sn-glycerol-3-phosphate (G3P) import. Binds G3P. The sequence is that of sn-glycerol-3-phosphate-binding periplasmic protein UgpB (ugpB) from Escherichia coli O1:K1 / APEC.